The following is a 629-amino-acid chain: Acetylcholinesterase (629 aa).

An N-terminal signal peptide occupies residues 1–38; it reads MGQLSILCLFVTVCASVCGYSWPSDETTTKPSQFKDFH. A disulfide bond links cysteine 103 and cysteine 130. Asparagine 125 is a glycosylation site (N-linked (GlcNAc...) asparagine). Serine 253 (acyl-ester intermediate) is an active-site residue. A disulfide bond links cysteine 307 and cysteine 322. Asparagine 308 carries N-linked (GlcNAc...) asparagine glycosylation. The Charge relay system role is filled by glutamate 382. Asparagine 418 carries N-linked (GlcNAc...) asparagine glycosylation. A disulfide bridge links cysteine 458 with cysteine 574. The active-site Charge relay system is the histidine 496. The N-linked (GlcNAc...) asparagine glycan is linked to asparagine 509. Serine 605 carries GPI-anchor amidated serine lipidation. Positions 606 to 629 are cleaved as a propeptide — removed in mature form; it reads SSNELLPPSTSLVLIWIMTLLNAL.

Belongs to the type-B carboxylesterase/lipase family. In terms of assembly, homodimer; disulfide-linked. The N-terminus is blocked.

It is found in the synapse. It localises to the cell membrane. It carries out the reaction acetylcholine + H2O = choline + acetate + H(+). Rapidly hydrolyzes choline released into the synapse. The protein is Acetylcholinesterase of Leptinotarsa decemlineata (Colorado potato beetle).